A 112-amino-acid chain; its full sequence is 2Fe-2S ferredoxin (112 aa).

A 2Fe-2S ferredoxin-type domain is found at 5-107 (IKVTFIINDE…GIKVRLPSAT (103 aa)). Residues cysteine 42, cysteine 48, cysteine 51, and cysteine 88 each coordinate [2Fe-2S] cluster.

It belongs to the adrenodoxin/putidaredoxin family. Requires [2Fe-2S] cluster as cofactor.

Ferredoxin are iron-sulfur proteins that transfer electrons in a wide variety of metabolic reactions. This Rickettsia prowazekii (strain Madrid E) protein is 2Fe-2S ferredoxin (fdxB).